A 449-amino-acid polypeptide reads, in one-letter code: Amidophosphoribosyltransferase (449 aa).

The propeptide occupies 1 to 9; the sequence is MRGEIMKEK. Residue Cys10 is the Nucleophile of the active site. In terms of domain architecture, Glutamine amidotransferase type-2 spans 10-224; it reads CGIFGAYSQD…PGEVIVVKDG (215 aa). A [4Fe-4S] cluster-binding site is contributed by Cys239. 3 residues coordinate Mg(2+): Ser286, Asp346, and Asp347. Cys383, Cys432, and Cys435 together coordinate [4Fe-4S] cluster.

It in the C-terminal section; belongs to the purine/pyrimidine phosphoribosyltransferase family. Mg(2+) is required as a cofactor. Requires [4Fe-4S] cluster as cofactor.

It catalyses the reaction 5-phospho-beta-D-ribosylamine + L-glutamate + diphosphate = 5-phospho-alpha-D-ribose 1-diphosphate + L-glutamine + H2O. It participates in purine metabolism; IMP biosynthesis via de novo pathway; N(1)-(5-phospho-D-ribosyl)glycinamide from 5-phospho-alpha-D-ribose 1-diphosphate: step 1/2. In terms of biological role, catalyzes the formation of phosphoribosylamine from phosphoribosylpyrophosphate (PRPP) and glutamine. This chain is Amidophosphoribosyltransferase, found in Pyrococcus horikoshii (strain ATCC 700860 / DSM 12428 / JCM 9974 / NBRC 100139 / OT-3).